The following is an 859-amino-acid chain: Outer membrane usher protein AfaC (859 aa).

An N-terminal signal peptide occupies residues 1–28 (MRDTSSGRMRTGVTGLALAVMVACVMFR).

This sequence belongs to the fimbrial export usher family.

It localises to the cell outer membrane. In terms of biological role, involved in the export and assembly of AFA-III afimbrial adhesin subunits across the outer membrane. The sequence is that of Outer membrane usher protein AfaC (afaC) from Escherichia coli.